The following is a 117-amino-acid chain: uncharacterized protein (117 aa).

A helical membrane pass occupies residues 1-21; it reads MEIAIIALFIVSIALIAFSYS. The stretch at 38 to 67 forms a coiled coil; that stretch reads LSAMQEIYKLKKKMTVLEEELLETNLVIRK.

Its subcellular location is the cell membrane. This is an uncharacterized protein from Bacillus subtilis (strain 168).